The sequence spans 641 residues: Ribosomal oxygenase 1 (641 aa).

Methionine 1 is subject to N-acetylmethionine. Disordered stretches follow at residues methionine 1–arginine 35 and arginine 54–proline 80. Basic residues predominate over residues arginine 12–glutamine 23. Serine 60, serine 63, and serine 109 each carry phosphoserine. A JmjC domain is found at cysteine 294–alanine 439. Residues histidine 340, aspartate 342, and histidine 405 each contribute to the Fe cation site.

It belongs to the ROX family. NO66 subfamily. As to quaternary structure, interacts with SP7/OSX; the interaction is direct. Interacts with MYC. Interacts with PHF19; leading to its recruitment to H3K36me3 sites. It depends on Fe(2+) as a cofactor. As to expression, widely expressed. Overexpressed in lung carcinomas.

Its subcellular location is the nucleus. The protein resides in the nucleolus. The protein localises to the nucleoplasm. The enzyme catalyses N(6),N(6)-dimethyl-L-lysyl(36)-[histone H3] + 2 2-oxoglutarate + 2 O2 = L-lysyl(36)-[histone H3] + 2 formaldehyde + 2 succinate + 2 CO2. It carries out the reaction N(6)-methyl-L-lysyl-[protein] + 2-oxoglutarate + O2 = L-lysyl-[protein] + formaldehyde + succinate + CO2. It catalyses the reaction L-histidyl-[protein] + 2-oxoglutarate + O2 = (3S)-3-hydroxy-L-histidyl-[protein] + succinate + CO2. Functionally, oxygenase that can act as both a histone lysine demethylase and a ribosomal histidine hydroxylase. Specifically demethylates 'Lys-4' (H3K4me) and 'Lys-36' (H3K36me) of histone H3, thereby playing a central role in histone code. Preferentially demethylates trimethylated H3 'Lys-4' (H3K4me3) and monomethylated H3 'Lys-4' (H3K4me1) residues, while it has weaker activity for dimethylated H3 'Lys-36' (H3K36me2). Acts as a regulator of osteoblast differentiation via its interaction with SP7/OSX by demethylating H3K4me and H3K36me, thereby inhibiting SP7/OSX-mediated promoter activation. Also catalyzes demethylation of non-histone proteins, such as CGAS: demethylation of monomethylated CGAS promotes interaction between CGAS and PARP1, followed by PARP1 inactivation. Also catalyzes the hydroxylation of 60S ribosomal protein L8 on 'His-216', thereby playing a role in ribosome biogenesis. Participates in MYC-induced transcriptional activation. This chain is Ribosomal oxygenase 1, found in Homo sapiens (Human).